We begin with the raw amino-acid sequence, 227 residues long: Prolactin-5A1 (227 aa).

The N-terminal stretch at 1-27 (MQIQPHPSGALLLLLLSNLLMWENVAS) is a signal peptide. A glycan (N-linked (GlcNAc...) asparagine) is linked at N47. C85 and C204 are joined by a disulfide.

Belongs to the somatotropin/prolactin family. As to expression, expressed specifically in placenta. Highly expressed in invasive trophoblast cells lining the central placental vessel.

It is found in the secreted. This Rattus norvegicus (Rat) protein is Prolactin-5A1 (Prl5a1).